The following is a 179-amino-acid chain: Large ribosomal subunit protein uL5 (179 aa).

This sequence belongs to the universal ribosomal protein uL5 family. Part of the 50S ribosomal subunit; part of the 5S rRNA/L5/L18/L25 subcomplex. Contacts the 5S rRNA and the P site tRNA. Forms a bridge to the 30S subunit in the 70S ribosome.

Its function is as follows. This is one of the proteins that bind and probably mediate the attachment of the 5S RNA into the large ribosomal subunit, where it forms part of the central protuberance. In the 70S ribosome it contacts protein S13 of the 30S subunit (bridge B1b), connecting the 2 subunits; this bridge is implicated in subunit movement. Contacts the P site tRNA; the 5S rRNA and some of its associated proteins might help stabilize positioning of ribosome-bound tRNAs. The polypeptide is Large ribosomal subunit protein uL5 (Shewanella sp. (strain MR-4)).